We begin with the raw amino-acid sequence, 766 residues long: Pyrophosphate-energized vacuolar membrane proton pump (766 aa).

The Intravacuolar portion of the chain corresponds to 2 to 8 (GAAILPD). The chain crosses the membrane as a helical span at residues 9–35 (LGTEILIPVCAVIGIAFALFQWLLVSK). Over 36–84 (VKLSAVRDASPNAAAKNGYNDYLIEEEEGINDHNVVVKCAEIQNAISEG) the chain is Cytoplasmic. A helical membrane pass occupies residues 85-114 (ATSFLFTEYKYVGIFMVAFAILIFLFLGSV). The Intravacuolar segment spans residues 115 to 135 (EGFSTSPQACSYDKTKTCKPA). A disulfide bridge links Cys-124 with Cys-132. Residues 136–163 (LATAIFSTVSFLLGGVTSLVSGFLGMKI) traverse the membrane as a helical segment. The Cytoplasmic segment spans residues 164–186 (ATYANARTTLEARKGVGKAFITA). Residues 187 to 216 (FRSGAVMGFLLAANGLLVLYIAINLFKIYY) traverse the membrane as a helical segment. Residues 217–219 (GDD) are Intravacuolar-facing. Residues 220-248 (WGGLFEAITGYGLGGSSMALFGRVGGGIY) form a helical membrane-spanning segment. The Cytoplasmic segment spans residues 249–286 (TKAADVGADLVGKVERNIPEDDPRNPAVIADNVGDNVG). Lys-250 is a substrate binding site. Positions 253, 257, and 283 each coordinate Mg(2+). The helical transmembrane segment at 287–312 (DIAGMGSDLFGSYAESSCAALVVASI) threads the bilayer. Over 313 to 320 (SSFGLNHE) the chain is Intravacuolar. A helical transmembrane segment spans residues 321–346 (LTAMLYPLIVSSVGILVCLLTTLFAT). Residues 347 to 354 (DFFEIKAV) are Cytoplasmic-facing. Residues 355 to 382 (KEIEPALKKQLVISTVLMTIGVAVVSFV) traverse the membrane as a helical segment. The Intravacuolar portion of the chain corresponds to 383-401 (ALPTSFTIFNFGVQKDVKS). The helical transmembrane segment at 402 to 425 (WQLFLCVAVGLWAGLIIGFVTEYY) threads the bilayer. Over 426–447 (TSNAYSPVQDVADSCRTGAATN) the chain is Cytoplasmic. Residues 448 to 472 (VIFGLALGYKSVIIPIFAIAISIFV) form a helical membrane-spanning segment. Residues 473 to 478 (SFTFAA) lie on the Intravacuolar side of the membrane. Residues 479–505 (MYGIAVAALGMLSTIATGLAIDAYGPI) form a helical membrane-spanning segment. Topologically, residues 506–534 (SDNAGGIAEMAGMSHRIRERTDALDAAGN) are cytoplasmic. Mg(2+)-binding residues include Asp-507 and Asn-534. The chain crosses the membrane as a helical span at residues 535 to 563 (TTAAIGKGFAIGSAALVSLALFGAFVSRA). Residues 564–573 (SITTVDVLTP) are Intravacuolar-facing. The chain crosses the membrane as a helical span at residues 574–602 (KVFIGLIVGAMLPYWFSAMTMKSVGSAAL). At 603–631 (KMVEEVRRQFNTIPGLMEGTAKPDYATCV) the chain is on the cytoplasmic side. A helical membrane pass occupies residues 632–660 (KISTDASIKEMIPPGALVMLTPLVVGILF). A topological domain (intravacuolar) is located at residue Gly-661. A helical transmembrane segment spans residues 662–689 (VETLSGVLAGSLVSGVQIAISASNTGGA). At 690–732 (WDNAKKYIEAGASEHARSLGPKGSDCHKAAVIGDTIGDPLKDT) the chain is on the cytoplasmic side. Mg(2+) is bound by residues Asp-691 and Asp-727. Lys-730 contacts substrate. The helical transmembrane segment at 733–758 (SGPSLNILIKLMAVESLVFAPFFATH) threads the bilayer. At 759–765 (GGLLFKI) the chain is on the intravacuolar side.

Belongs to the H(+)-translocating pyrophosphatase (TC 3.A.10) family. K(+)-stimulated subfamily. In terms of assembly, homodimer.

Its subcellular location is the vacuole membrane. It carries out the reaction diphosphate + H2O + H(+)(in) = 2 phosphate + 2 H(+)(out). Its activity is regulated as follows. Inhibited by excess pyrophosphate as well as excess Mg(2+). Inhibition by ATP, GTP, and CTP is reversed by increasing the Mg(2+) concentration. This suggests that the substrate is a particular metal complex such as MgPPi(2-). Modification of Asp-283 with DCCD abolishes pyrophosphatase activity. Proton-translocating inorganic pyrophosphatase that contributes to the transtonoplast (from cytosol to vacuole lumen) H(+)-electrochemical potential difference. It establishes a proton gradient of similar and often greater magnitude than the H(+)-ATPase on the same membrane. In Vigna radiata var. radiata (Mung bean), this protein is Pyrophosphate-energized vacuolar membrane proton pump.